The chain runs to 354 residues: Putative cinnamyl alcohol dehydrogenase 4 (354 aa).

Zn(2+) is bound by residues Cys47, His69, Glu70, Cys100, Cys103, Cys106, Cys114, and Cys163. NADP(+) contacts are provided by residues Thr167, 188-193 (GLGGLG), 211-216 (STSESK), Thr251, and 297-299 (SVT).

Belongs to the zinc-containing alcohol dehydrogenase family. In terms of assembly, homodimer. Zn(2+) serves as cofactor.

It catalyses the reaction (E)-cinnamyl alcohol + NADP(+) = (E)-cinnamaldehyde + NADPH + H(+). It carries out the reaction (E)-coniferol + NADP(+) = (E)-coniferaldehyde + NADPH + H(+). The enzyme catalyses (E)-sinapyl alcohol + NADP(+) = (E)-sinapaldehyde + NADPH + H(+). The catalysed reaction is (E)-4-coumaroyl alcohol + NADP(+) = (E)-4-coumaraldehyde + NADPH + H(+). It catalyses the reaction (E)-caffeyl alcohol + NADP(+) = (E)-caffeyl aldehyde + NADPH + H(+). It functions in the pathway aromatic compound metabolism; phenylpropanoid biosynthesis. Functionally, involved in lignin biosynthesis. Catalyzes the final step specific for the production of lignin monomers. Catalyzes the NADPH-dependent reduction of coniferaldehyde, 5-hydroxyconiferaldehyde, sinapaldehyde, 4-coumaraldehyde and caffeyl aldehyde to their respective alcohols. The chain is Putative cinnamyl alcohol dehydrogenase 4 from Oryza sativa subsp. japonica (Rice).